The following is a 112-amino-acid chain: UPF0342 protein SPP_1392 (112 aa).

This sequence belongs to the UPF0342 family.

This Streptococcus pneumoniae (strain P1031) protein is UPF0342 protein SPP_1392.